A 159-amino-acid polypeptide reads, in one-letter code: Transcription elongation factor A protein-like 1 (159 aa).

The disordered stretch occupies residues 1-99 (MDKPRKENEE…CGVGKHKLEE (99 aa)). Basic and acidic residues predominate over residues 17-34 (KTDEERPPVEHSPEKQSL). Over residues 37 to 54 (QSSEEQSSEEEFFPEELL) the composition is skewed to acidic residues. The segment covering 64 to 80 (SEERPPQEGLSRKDLFE) has biased composition (basic and acidic residues).

It belongs to the TFS-II family. TFA subfamily.

The protein localises to the nucleus. In terms of biological role, may be involved in transcriptional regulation. Modulates various viral and cellular promoters in a promoter context-dependent manner. Does not bind DNA directly. This Ateles geoffroyi (Black-handed spider monkey) protein is Transcription elongation factor A protein-like 1.